The sequence spans 176 residues: Ribosome maturation factor RimM (176 aa).

Positions 97-176 (EDEFYWRDLI…QIIVDWDPDF (80 aa)) constitute a PRC barrel domain.

It belongs to the RimM family. In terms of assembly, binds ribosomal protein uS19.

The protein localises to the cytoplasm. An accessory protein needed during the final step in the assembly of 30S ribosomal subunit, possibly for assembly of the head region. Essential for efficient processing of 16S rRNA. May be needed both before and after RbfA during the maturation of 16S rRNA. It has affinity for free ribosomal 30S subunits but not for 70S ribosomes. This chain is Ribosome maturation factor RimM, found in Shewanella amazonensis (strain ATCC BAA-1098 / SB2B).